Here is a 380-residue protein sequence, read N- to C-terminus: 1-deoxy-D-xylulose 5-phosphate reductoisomerase (380 aa).

NADPH-binding residues include threonine 10, glycine 11, serine 12, isoleucine 13, glycine 36, arginine 37, asparagine 38, and asparagine 120. Lysine 121 is a binding site for 1-deoxy-D-xylulose 5-phosphate. Glutamate 122 contributes to the NADPH binding site. A Mn(2+)-binding site is contributed by aspartate 146. Positions 147, 148, 172, and 195 each coordinate 1-deoxy-D-xylulose 5-phosphate. Mn(2+) is bound at residue glutamate 148. An NADPH-binding site is contributed by glycine 201. The 1-deoxy-D-xylulose 5-phosphate site is built by serine 208, asparagine 213, lysine 214, and glutamate 217. Glutamate 217 is a binding site for Mn(2+).

Belongs to the DXR family. Mg(2+) serves as cofactor. The cofactor is Mn(2+).

It carries out the reaction 2-C-methyl-D-erythritol 4-phosphate + NADP(+) = 1-deoxy-D-xylulose 5-phosphate + NADPH + H(+). Its pathway is isoprenoid biosynthesis; isopentenyl diphosphate biosynthesis via DXP pathway; isopentenyl diphosphate from 1-deoxy-D-xylulose 5-phosphate: step 1/6. Functionally, catalyzes the NADPH-dependent rearrangement and reduction of 1-deoxy-D-xylulose-5-phosphate (DXP) to 2-C-methyl-D-erythritol 4-phosphate (MEP). This chain is 1-deoxy-D-xylulose 5-phosphate reductoisomerase, found in Listeria innocua serovar 6a (strain ATCC BAA-680 / CLIP 11262).